Here is a 977-residue protein sequence, read N- to C-terminus: MAQFYYKRNVNAPYRDRIPLRIVRAESELSPSEKAYLNAVEKGDYASVKKSLEEAEIYFKININCIDPLGRTALLIAIENENLELIELLLSFNVYVGDALLHAIRKEVVGAVELLLNHKKPSGEKQVPPILLDKQFSEFTPDITPIILAAHTNNYEIIKLLVQKGVSVPRPHEVRCNCVECVSSSDVDSLRHSRSRLNIYKALASPSLIALSSEDPFLTAFQLSWELQELSKVENEFKSEYEELSRQCKQFAKDLLDQTRSSRELEIILNYRDDNSLIEEQSGNDLARLKLAIKYRQKEFVAQPNCQQLLASRWYDEFPGWRRRHWAVKMVTCFIIGLLFPVFSVCYLIAPKSPLGLFIRKPFIKFICHTASYLTFLFLLLLASQHIDRSDLNRQGPPPTIVEWMILPWVLGFIWGEIKQMWDGGLQDYIHDWWNLMDFVMNSLYLATISLKIVAFVKYSALNPRESWDMWHPTLVAEALFAIANIFSSLRLISLFTANSHLGPLQISLGRMLLDILKFLFIYCLVLLAFANGLNQLYFYYEETKGLTCKGIRCEKQNNAFSTLFETLQSLFWSIFGLINLYVTNVKAQHEFTEFVGATMFGTYNVISLVVLLNMLIAMMNNSYQLIADHADIEWKFARTKLWMSYFEEGGTLPTPFNVIPSPKSLWYLIKWIWTHLCKKKMRRKPESFGTIGRRAADNLRRHHQYQEVMRNLVKRYVAAMIRDAKTEEGLTEENFKELKQDISSFRFEVLGLLRGSKLSTIQSANASKESSNSADSDEKSDSEGNSKDKKKNFSLFDLTTLIHPRSAAIASERHNISNGSALVVQEPPREKQRKVNFVTDIKNFGLFHRRSKQNAAEQNANQIFSVSEEVARQQAAGPLERNIQLESRGLASRGDLSIPGLSEQCVLVDHRERNTDTLGLQVGKRVCPFKSEKVVVEDTVPIIPKEKHAKEEDSSIDYDLNLPDTVTHEDYVTTRL.

Residues 1–324 lie on the Cytoplasmic side of the membrane; the sequence is MAQFYYKRNV…YDEFPGWRRR (324 aa). 4 ANK repeats span residues 29 to 60, 71 to 93, 96 to 118, and 141 to 165; these read LSPS…IYFK, RTAL…LSFN, VGDA…LLNH, and PDIT…VQKG. 4 residues coordinate Zn(2+): H172, C176, C178, and C181. A coiled-coil region spans residues 223 to 260; it reads LSWELQELSKVENEFKSEYEELSRQCKQFAKDLLDQTR. The discontinuously helical intramembrane region spans 325 to 359; it reads HWAVKMVTCFIIGLLFPVFSVCYLIAPKSPLGLFI. Residues 360-362 lie on the Cytoplasmic side of the membrane; the sequence is RKP. The helical transmembrane segment at 363–383 threads the bilayer; it reads FIKFICHTASYLTFLFLLLLA. Over 384 to 403 the chain is Extracellular; that stretch reads SQHIDRSDLNRQGPPPTIVE. The helical transmembrane segment at 404-418 threads the bilayer; sequence WMILPWVLGFIWGEI. Ca(2+) contacts are provided by E417, Q420, N435, and D438. Over 419 to 432 the chain is Cytoplasmic; sequence KQMWDGGLQDYIHD. Residues 433 to 453 traverse the membrane as a helical segment; it reads WWNLMDFVMNSLYLATISLKI. Topologically, residues 454–475 are extracellular; the sequence is VAFVKYSALNPRESWDMWHPTL. The chain crosses the membrane as a helical span at residues 476 to 498; sequence VAEALFAIANIFSSLRLISLFTA. Residues 499 to 511 lie on the Cytoplasmic side of the membrane; that stretch reads NSHLGPLQISLGR. The helical transmembrane segment at 512–534 threads the bilayer; it reads MLLDILKFLFIYCLVLLAFANGL. Residues 535 to 599 lie on the Extracellular side of the membrane; the sequence is NQLYFYYEET…HEFTEFVGAT (65 aa). C549 and C554 form a disulfide bridge. The chain crosses the membrane as a helical span at residues 600–620; it reads MFGTYNVISLVVLLNMLIAMM. The interaction with ITPR1, ITPR2 and ITPR3 stretch occupies residues 615–977; it reads MLIAMMNNSY…THEDYVTTRL (363 aa). Over 621 to 977 the chain is Cytoplasmic; the sequence is NNSYQLIADH…THEDYVTTRL (357 aa). The disordered stretch occupies residues 762 to 790; the sequence is IQSANASKESSNSADSDEKSDSEGNSKDK. Over residues 764–775 the composition is skewed to low complexity; sequence SANASKESSNSA. The span at 777–788 shows a compositional bias: basic and acidic residues; the sequence is SDEKSDSEGNSK. A phosphotyrosine; by FYN mark is found at Y959 and Y972. The segment at 975 to 977 is PDZ-binding domain; it reads TRL.

Belongs to the transient receptor (TC 1.A.4) family. STrpC subfamily. TRPC4 sub-subfamily. Homotetramer. Heterotetramer with TRPC1 and/or TRPC5. Forms a heteromeric ion channel with TRPC1, with a 1:3 TRPC1:TRPC4 stoichiometry. Interacts with TRPC4AP. Isoform alpha but not isoform beta interacts with ITPR1, ITPR2 and ITPR3. Interacts with (via PDZ-binding domain) with NHERF1. Interacts with MX1 and RNF24. Interacts (via CIRB domain) with SESTD1 (via spectrin 1 repeat). Interacts with CDH5 and CTNNB1. Interacts with SPTAN1 (via C-terminal spectrin repeats) and SPTBN5 (via C-terminus). Interacts (via protein 4.1-binding domain) with EPB41L2. Interacts with PLSCR1. Phosphorylation modulates TRPC channel function by regulating the level of TRPC4 at the cell surface and by increasing the association with NHERF1. As to expression, strongly expressed in placenta. Expressed at lower levels in heart, pancreas, kidney and brain. Expressed in endothelial cells. Isoform alpha was found to be the predominant isoform. Isoform beta was not found in pancreas and brain.

It is found in the cell membrane. The enzyme catalyses Ca(2+)(in) = Ca(2+)(out). The catalysed reaction is Na(+)(in) = Na(+)(out). It catalyses the reaction Li(+)(in) = Li(+)(out). It carries out the reaction Cs(+)(in) = Cs(+)(out). May be operated by a phosphatidylinositol second messenger system activated by receptor tyrosine kinases or G-protein coupled receptors. May be activated by intracellular calcium store depletion. Inhibited by xanthine-based inhibitor Pico145. Forms a receptor-activated non-selective calcium permeant cation channel. Acts as a cell-cell contact-dependent endothelial calcium entry channel. Forms a homomeric ion channel or a heteromeric ion channel with TRPC1; the heteromeric ion channel has reduced calcium permeability compared to the homomeric channel. Also permeable to monovalent ions including sodium, lithium and cesium ions. Its function is as follows. Forms a receptor-activated non-selective calcium permeant cation channel. The polypeptide is Short transient receptor potential channel 4 (TRPC4) (Homo sapiens (Human)).